The sequence spans 397 residues: Phosphoglycerate kinase (397 aa).

Residues 22-24 (DYN), Arg-38, 61-64 (HLGR), Arg-119, and Arg-152 contribute to the substrate site. ATP-binding positions include Lys-203, Gly-294, Glu-325, and 351 to 354 (GGDT).

The protein belongs to the phosphoglycerate kinase family. Monomer.

The protein localises to the cytoplasm. It carries out the reaction (2R)-3-phosphoglycerate + ATP = (2R)-3-phospho-glyceroyl phosphate + ADP. The protein operates within carbohydrate degradation; glycolysis; pyruvate from D-glyceraldehyde 3-phosphate: step 2/5. This chain is Phosphoglycerate kinase (pgk), found in Aquifex aeolicus (strain VF5).